The primary structure comprises 243 residues: R-spondin-2 (243 aa).

An N-terminal signal peptide occupies residues 1-21 (MQFQLFSFVLIILNCVDYSHC). Cystine bridges form between Cys40/Cys46, Cys43/Cys52, Cys55/Cys74, Cys78/Cys93, Cys96/Cys104, Cys101/Cys110, Cys113/Cys124, Cys128/Cys141, Cys145/Cys187, Cys156/Cys163, and Cys196/Cys203. Residues 90 to 134 (MNRCSRCRIENCDSCFSRDFCIKCKSGFYSHKGQCFEECPEGFAP) form an FU repeat. Positions 144–204 (GCEVGPWSEW…RCKMAMRHCP (61 aa)) constitute a TSP type-1 domain. Asn160 carries an N-linked (GlcNAc...) asparagine glycan. The segment at 202–243 (HCPGGTRTTKKKDKKNKKKKKKLLERAQEQHSVVLATDRSSQ) is disordered. Positions 209–224 (TTKKKDKKNKKKKKKL) are enriched in basic residues.

This sequence belongs to the R-spondin family. As to quaternary structure, binds heparin.

It localises to the secreted. Its function is as follows. Activator of the canonical Wnt signaling pathway by acting as a ligand for lgr4-6 receptors. Upon binding to lgr4-6 (lgr4, lgr5 or lgr6), lgr4-6 associate with phosphorylated lrp6 and frizzled receptors that are activated by extracellular Wnt receptors, triggering the canonical Wnt signaling pathway to increase expression of target genes. Acts both in the canonical. Wnt/beta-catenin-dependent pathway and in non-canonical Wnt signaling pathway. Activates neural markers and promotes muscle formation. Overexpression blocks activin, nodal and BMP4 signaling, suggesting that it may negatively regulate the TGF-beta pathway. During embryonic development, plays a crucial role in limb specification, amplifying the Wnt signaling pathway independently of LGR4-6 receptors, possibly by acting as a direct antagonistic ligand to RNF43 and ZNRF3, hence governing the number of limbs an embryo should form. This is R-spondin-2 (rspo2) from Xenopus tropicalis (Western clawed frog).